The primary structure comprises 436 residues: F-box protein SKIP16 (436 aa).

An F-box; degenerate domain is found at Arg75–Leu111. The ApaG domain occupies Val295–Phe436.

Part of a SCF (ASK-cullin-F-box) protein ligase complex. Interacts with SKP1A/ASK1, SKP1B/ASK2, ASK4, ASK11 and ASK13.

The protein operates within protein modification; protein ubiquitination. Its function is as follows. Component of SCF(ASK-cullin-F-box) E3 ubiquitin ligase complexes, which may mediate the ubiquitination and subsequent proteasomal degradation of target proteins. The sequence is that of F-box protein SKIP16 (SKIP16) from Arabidopsis thaliana (Mouse-ear cress).